Consider the following 112-residue polypeptide: Small ribosomal subunit protein bS6 (112 aa).

The protein belongs to the bacterial ribosomal protein bS6 family.

Binds together with bS18 to 16S ribosomal RNA. This Christiangramia forsetii (strain DSM 17595 / CGMCC 1.15422 / KT0803) (Gramella forsetii) protein is Small ribosomal subunit protein bS6.